A 237-amino-acid polypeptide reads, in one-letter code: Corrinoid adenosyltransferase MMAB (237 aa).

A mitochondrion-targeting transit peptide spans 1-26 (MAVWLFGGRLGLRGRLSACRLLCPRF). Residues 30-49 (GPQGGEDGDRLQPSSTAAKI) form a disordered region. Residues 54 to 57 (TKTG), 62 to 63 (SS), and Lys-72 each bind ATP. Ser-128 is subject to Phosphoserine. 184 to 188 (RRAER) provides a ligand contact to ATP. Lys-205 is modified (N6-succinyllysine). Asn-208 serves as a coordination point for ATP. An N6-acetyllysine; alternate modification is found at Lys-224. Lys-224 carries the N6-succinyllysine; alternate modification.

It belongs to the Cob(I)alamin adenosyltransferase family. In terms of assembly, homotrimer.

It localises to the mitochondrion. It carries out the reaction cob(I)alamin-[corrinoid adenosyltransferase] + ATP = apo-[corrinoid adenosyltransferase] + adenosylcob(III)alamin + triphosphate. Functionally, converts cob(I)alamin to adenosylcobalamin (adenosylcob(III)alamin), a coenzyme for methylmalonyl-CoA mutase, therefore participates in the final step of the vitamin B12 conversion. Generates adenosylcobalamin (AdoCbl) and directly delivers the cofactor to MUT in a transfer that is stimulated by ATP-binding to MMAB and gated by MMAA. In Mus musculus (Mouse), this protein is Corrinoid adenosyltransferase MMAB.